The chain runs to 77 residues: Distinctin-like peptide (77 aa).

A signal peptide spans 1–19 (LKKSLFLVTFLALVPLFLC). A propeptide spanning residues 20-39 (EEEKREEENEERQDDDQSEE) is cleaved from the precursor.

Belongs to the frog skin active peptide (FSAP) family. In terms of tissue distribution, expressed by the skin glands.

The protein localises to the secreted. Functionally, has antimicrobial activity. This Pithecopus azureus (Orange-legged monkey tree frog) protein is Distinctin-like peptide.